The primary structure comprises 358 residues: Gibberellin 2-beta-dioxygenase 6 (358 aa).

The 102-residue stretch at 207–308 (DETTCFLRLN…RLSVAYFLCP (102 aa)) folds into the Fe2OG dioxygenase domain. Tyr218 serves as a coordination point for 2-oxoglutarate. Positions 233, 235, and 289 each coordinate Fe cation. Residues Arg299 and Ser301 each contribute to the 2-oxoglutarate site.

Belongs to the iron/ascorbate-dependent oxidoreductase family. GA2OX subfamily. The cofactor is L-ascorbate. It depends on Fe(2+) as a cofactor. As to expression, expressed in panicles. Expressed at low levels in young shoots, leaf blades and elongating internodes.

It localises to the cytoplasm. The protein localises to the nucleus. It catalyses the reaction gibberellin A1 + 2-oxoglutarate + O2 = gibberellin A8 + succinate + CO2. In terms of biological role, catalyzes the 2-beta-hydroxylation of several biologically active gibberellins, leading to the homeostatic regulation of their endogenous level. Catabolism of gibberellins (GAs) plays a central role in plant development. In vitro, converts GA12 and GA53 to the corresponding 2-beta-hydroxylated products GA110 and GA97, respectively. This chain is Gibberellin 2-beta-dioxygenase 6, found in Oryza sativa subsp. japonica (Rice).